Here is a 489-residue protein sequence, read N- to C-terminus: Cytochrome P450 monooxygenase AMT3 (489 aa).

Residues 292–312 (LFMVAGTETTITALSGLVFLL) form a helical membrane-spanning segment. Residue Cys436 participates in heme binding.

It belongs to the cytochrome P450 family. It depends on heme as a cofactor.

The protein resides in the membrane. It functions in the pathway mycotoxin biosynthesis. Its function is as follows. Cytochrome P450 monooxygenase; part of the gene clusters that mediate the biosynthesis of AM-toxins, host-selective toxins (HSTs) causing Alternaria blotch on apple, a worldwide distributed disease. AM-toxins are cyclic depsipeptides containing the 3 residues 2-hydroxy-isovaleric acid (2-HIV), dehydroalanine, L-alanine which are common for all 3 AM-toxins I to III. The fourth precursor is L-alpha-amino-methoxyphenyl-valeric acid (L-Amv) for AM-toxin I, L-alpha-amino-phenyl-valeric acid (L-Apv) for AM-toxin II, and L-alpha-amino-hydroxyphenyl-valeric acid (L-Ahv) for AM-toxin III. AM-toxins have two target sites for affecting susceptible apple cells; they cause invagination of the plasma membrane and electrolyte loss and chloroplast disorganization. The non-ribosomal peptide synthetase AMT1 contains 4 catalytic modules and is responsible for activation of each residue in AM-toxin. The aldo-keto reductase AMT2 catalyzes the conversion of 2-keto-isovaleric acid (2-KIV) to 2-hydroxy-isovaleric acid (2-HIV), one of the precursor residues incorporated by AMT1 during AM-toxin biosynthesis, by reduction of its ketone to an alcohol. The cytochrome P450 monooxygenase AMT3 and the thioesterase AMT4 are also important for AM-toxin production, but their exact function within the AM-toxin biosynthesis are not known yet. Up to 21 proteins (including AMT1 to AMT4) are predicted to be involved in AM-toxin biosynthesis since their expression ishighly up-regulated in AM-toxin-producing cultures. The chain is Cytochrome P450 monooxygenase AMT3 from Alternaria alternata (Alternaria rot fungus).